The chain runs to 254 residues: Triosephosphate isomerase (254 aa).

Substrate is bound at residue 9-11 (NWK). Histidine 96 (electrophile) is an active-site residue. Glutamate 169 serves as the catalytic Proton acceptor. Substrate is bound by residues glycine 175, serine 215, and 236–237 (GG).

Belongs to the triosephosphate isomerase family. In terms of assembly, homodimer.

It is found in the cytoplasm. It catalyses the reaction D-glyceraldehyde 3-phosphate = dihydroxyacetone phosphate. It participates in carbohydrate biosynthesis; gluconeogenesis. Its pathway is carbohydrate degradation; glycolysis; D-glyceraldehyde 3-phosphate from glycerone phosphate: step 1/1. Its function is as follows. Involved in the gluconeogenesis. Catalyzes stereospecifically the conversion of dihydroxyacetone phosphate (DHAP) to D-glyceraldehyde-3-phosphate (G3P). The protein is Triosephosphate isomerase of Borrelia recurrentis (strain A1).